Here is a 301-residue protein sequence, read N- to C-terminus: ATP synthase gamma chain (301 aa).

This sequence belongs to the ATPase gamma chain family. In terms of assembly, F-type ATPases have 2 components, CF(1) - the catalytic core - and CF(0) - the membrane proton channel. CF(1) has five subunits: alpha(3), beta(3), gamma(1), delta(1), epsilon(1). CF(0) has three main subunits: a, b and c.

It is found in the cell inner membrane. Functionally, produces ATP from ADP in the presence of a proton gradient across the membrane. The gamma chain is believed to be important in regulating ATPase activity and the flow of protons through the CF(0) complex. The polypeptide is ATP synthase gamma chain (Bordetella bronchiseptica (strain ATCC BAA-588 / NCTC 13252 / RB50) (Alcaligenes bronchisepticus)).